An 873-amino-acid chain; its full sequence is Potassium voltage-gated channel subfamily KQT member 3 (873 aa).

The disordered stretch occupies residues 1 to 41 (MGLKARRAAGAAGGGGGEGGGGGGGAANPAGGDSAVAGDEE). Over 1–121 (MGLKARRAAG…IYDALERPRG (121 aa)) the chain is Cytoplasmic. Positions 11–26 (AAGGGGGEGGGGGGGA) are enriched in gly residues. Residue Thr82 is modified to Phosphothreonine. Residues 122 to 144 (WALLYHALVFLIVLGCLILAVLT) traverse the membrane as a helical segment. The Extracellular portion of the chain corresponds to 145 to 154 (TFKEYETVSG). Residues 155 to 176 (DWLLLLETFAIFIFGAEFALRI) form a helical membrane-spanning segment. The Cytoplasmic portion of the chain corresponds to 177-194 (WAAGCCCRYKGWRGRLKF). The helical transmembrane segment at 195-214 (ARKPLCMLDIFVLIASVPVV) threads the bilayer. The Extracellular segment spans residues 215 to 226 (AVGNQGNVLATS). Residues 227-245 (LRSLRFLQILRMLRMDRRG) traverse the membrane as a helical; Voltage-sensor segment. An a 1,2-diacyl-sn-glycero-3-phospho-(1D-myo-inositol-4,5-bisphosphate)-binding site is contributed by Arg244. Topologically, residues 246–257 (GTWKLLGSAICA) are cytoplasmic. A helical transmembrane segment spans residues 258–283 (HSKELITAWYIGFLTLILSSFLVYLV). Residue Lys260 coordinates a 1,2-diacyl-sn-glycero-3-phospho-(1D-myo-inositol-4,5-bisphosphate). At 284-303 (EKDVPEMDAQGEEMKEEFET) the chain is on the extracellular side. Positions 304–316 (YADALWWGLITLA) form an intramembrane region, pore-forming. The Selectivity filter motif lies at 317 to 322 (TIGYGD). The Extracellular segment spans residues 317 to 327 (TIGYGDKTPKT). A helical membrane pass occupies residues 328–354 (WEGRLIAATFSLIGVSFFALPAGILGS). Topologically, residues 355–873 (GLALKVQEQH…SIWTPSNKPT (519 aa)) are cytoplasmic. The segment at 357 to 538 (ALKVQEQHRQ…RLYKKKFKET (182 aa)) is mediates interaction with calmodulin. Lys367 provides a ligand contact to a 1,2-diacyl-sn-glycero-3-phospho-(1D-myo-inositol-4,5-bisphosphate). 3 disordered regions span residues 575–603 (PGPP…PRNE), 723–742 (RGGP…GSTY), and 766–873 (ELQG…NKPT). 3 stretches are compositionally biased toward polar residues: residues 588 to 601 (KGSA…QSPR), 725 to 741 (GPSS…SGST), and 844 to 873 (DPFT…NKPT).

It belongs to the potassium channel family. KQT (TC 1.A.1.15) subfamily. Kv7.3/KCNQ3 sub-subfamily. In terms of assembly, heterotetramer with KCNQ2; forms heterotetrameric M-channel responsible for the native M-current. Interacts with calmodulin; the interaction is calcium-independent, constitutive and participates in the proper assembly of a functional M-channel. Heteromultimer with KCNQ5. May associate with KCNE2. Interacts with IQCJ-SCHIP1. Interacts (via the pore module) with SLC5A3/SMIT1; forms a coregulatory complex that alters ion selectivity, voltage dependence and gating kinetics of the channel. KCNQ2/KCNQ3 are ubiquitinated by NEDD4L. Ubiquitination leads to protein degradation. Degradation induced by NEDD4L is inhibited by USP36. As to expression, expressed in brain and sympathetic ganglia. In brain, expressed in cortex, hippocampus and at much lower levels in cerebellum. In sympathetic ganglia, expressed at approximately equal levels in both superior cervical ganglia and prevertebral ganglia.

The protein localises to the cell membrane. It catalyses the reaction K(+)(in) = K(+)(out). It carries out the reaction Rb(+)(in) = Rb(+)(out). The enzyme catalyses Cs(+)(in) = Cs(+)(out). The catalysed reaction is Na(+)(in) = Na(+)(out). Its activity is regulated as follows. Phosphatidylinositol-4,5-bisphosphate (PIP2) potentiates the activation of KCNQ channels by enhancing the electro-mechanical coupling of the voltage-sensing domain (VSD) and the pore-forming domain (PD). In the closed state of the channel, PIP2 is anchored at the S2-S3 loop; upon channel activation, PIP2 interacts with the S4-S5 linker and is involved in channel gating. Calcium suppresses KCNQ2-KCNQ3 channel currents, with calcium-bound calmodulin inducing a change in channel configuration which leads to the reduction of channel affinity for PIP2 and subsequent current suppression. M-channel is blocked by XE991. In terms of biological role, pore-forming subunit of the voltage-gated potassium (Kv) M-channel which is responsible for the M-current, a key controller of neuronal excitability. M-channel is composed of pore-forming subunits KCNQ2 and KCNQ3 assembled as heterotetramers, each subunit containing a voltage sensing domain (VSD) and a pore-forming domain (PD). The native M-current has a slowly activating and deactivating potassium conductance which plays a critical role in determining the subthreshold electrical excitability of neurons as well as the responsiveness to synaptic inputs. M-channel is selectively permeable in vitro to other cations besides potassium, in decreasing order of affinity K(+) &gt; Rb(+) &gt; Cs(+) &gt; Na(+). M-channel association with SLC5A3/SMIT1 alters channel ion selectivity, increasing Na(+) and Cs(+) permeation relative to K(+). Suppressed by activation of M1 muscarinic acetylcholine receptors. KCNQ3 also associates with KCNQ5 to form a functional channel in vitro and may also contribute to the M-current in brain. This Rattus norvegicus (Rat) protein is Potassium voltage-gated channel subfamily KQT member 3.